The primary structure comprises 370 residues: Histidinol-phosphate aminotransferase 2 (370 aa).

At K230 the chain carries N6-(pyridoxal phosphate)lysine.

The protein belongs to the class-II pyridoxal-phosphate-dependent aminotransferase family. Histidinol-phosphate aminotransferase subfamily. In terms of assembly, homodimer. It depends on pyridoxal 5'-phosphate as a cofactor.

The enzyme catalyses L-histidinol phosphate + 2-oxoglutarate = 3-(imidazol-4-yl)-2-oxopropyl phosphate + L-glutamate. The protein operates within amino-acid biosynthesis; L-histidine biosynthesis; L-histidine from 5-phospho-alpha-D-ribose 1-diphosphate: step 7/9. The polypeptide is Histidinol-phosphate aminotransferase 2 (Pseudomonas fluorescens (strain Pf0-1)).